The primary structure comprises 102 residues: Small ribosomal subunit protein uS10 (102 aa).

It belongs to the universal ribosomal protein uS10 family. In terms of assembly, part of the 30S ribosomal subunit.

In terms of biological role, involved in the binding of tRNA to the ribosomes. The chain is Small ribosomal subunit protein uS10 from Methanospirillum hungatei JF-1 (strain ATCC 27890 / DSM 864 / NBRC 100397 / JF-1).